The primary structure comprises 95 residues: uncharacterized protein (95 aa).

2 consecutive repeat copies span residues 67-74 (GCGCGCGC) and 85-92 (CGGCCGCG). A 2 X 8 AA approximate repeats region spans residues 67 to 92 (GCGCGCGCATVAAVSPVPCGGCCGCG).

This is an uncharacterized protein from Caenorhabditis elegans.